Reading from the N-terminus, the 193-residue chain is Mediator of RNA polymerase II transcription subunit 11 (193 aa).

Positions 31–68 (AREIMQDLGKEKQISKNKMDDNANSFKKLITQVENELS) form a coiled coil. Positions 115–193 (IEPPTQEVDE…EEEEGEQMEN (79 aa)) are disordered. Over residues 121 to 143 (EVDEDNEDEEDSGDADMLEETPE) the composition is skewed to acidic residues. Over residues 150-175 (TTSSSATTSDGGSGGADDAASSSAPR) the composition is skewed to low complexity. Positions 184–193 (EEEEGEQMEN) are enriched in acidic residues.

The protein belongs to the Mediator complex subunit 11 family. As to quaternary structure, component of the Mediator complex.

The protein localises to the nucleus. Component of the Mediator complex, a coactivator involved in the regulated transcription of nearly all RNA polymerase II-dependent genes. Mediator functions as a bridge to convey information from gene-specific regulatory proteins to the basal RNA polymerase II transcription machinery. Mediator is recruited to promoters by direct interactions with regulatory proteins and serves as a scaffold for the assembly of a functional pre-initiation complex with RNA polymerase II and the general transcription factors. This chain is Mediator of RNA polymerase II transcription subunit 11 (mdt-11), found in Caenorhabditis briggsae.